The chain runs to 450 residues: Glucose-6-phosphate isomerase (450 aa).

Glu291 (proton donor) is an active-site residue. Active-site residues include His312 and Lys426.

Belongs to the GPI family.

It is found in the cytoplasm. It carries out the reaction alpha-D-glucose 6-phosphate = beta-D-fructose 6-phosphate. It functions in the pathway carbohydrate biosynthesis; gluconeogenesis. Its pathway is carbohydrate degradation; glycolysis; D-glyceraldehyde 3-phosphate and glycerone phosphate from D-glucose: step 2/4. Its function is as follows. Catalyzes the reversible isomerization of glucose-6-phosphate to fructose-6-phosphate. In Clostridium botulinum (strain Langeland / NCTC 10281 / Type F), this protein is Glucose-6-phosphate isomerase.